Consider the following 314-residue polypeptide: Nodulation protein D 1 (314 aa).

Residues Leu6–Thr63 enclose the HTH lysR-type domain. A DNA-binding region (H-T-H motif) is located at residues Leu23–Ala42.

The protein belongs to the LysR transcriptional regulatory family.

Functionally, nodD regulates the expression of the nodABCFE genes which encode other nodulation proteins. NodD is also a negative regulator of its own expression. Binds flavonoids as inducers. This Bradyrhizobium diazoefficiens (strain JCM 10833 / BCRC 13528 / IAM 13628 / NBRC 14792 / USDA 110) protein is Nodulation protein D 1 (nodD1).